Reading from the N-terminus, the 567-residue chain is DNA ligase B (567 aa).

Lys126 serves as the catalytic N6-AMP-lysine intermediate.

This sequence belongs to the NAD-dependent DNA ligase family. LigB subfamily.

It catalyses the reaction NAD(+) + (deoxyribonucleotide)n-3'-hydroxyl + 5'-phospho-(deoxyribonucleotide)m = (deoxyribonucleotide)n+m + AMP + beta-nicotinamide D-nucleotide.. Catalyzes the formation of phosphodiester linkages between 5'-phosphoryl and 3'-hydroxyl groups in double-stranded DNA using NAD as a coenzyme and as the energy source for the reaction. This chain is DNA ligase B, found in Pseudomonas putida (strain W619).